We begin with the raw amino-acid sequence, 383 residues long: MTWQARIDAALRAREASHSLRRRVVCTPAPGGALVHQGVRYRNFSGNDYLGLSQHPALIAAWQQGAQTYGVGSGASGHVSGYSDAHQSLENALAHWLGFDRALLFISGFAANQAVVAALMQQSDRILADRLSHASLLEAASHSPATLRRFAHNDSGALAALLGKPCDGLTLVFTEGVFSMDGDSAPLADIAGIAQGAQTLLMVDDAHGVGVQGREGRGSCDVAGIRPDLLLVTFGKAFGLSGAALLCSAPMADYLLQTARHLIYSTAMPAAQACALNAALTVIREGDDLRARLARNIARFRAGAASLPLTLADSQTAIQPLIVGENSAALTLAEKLRERGCWVTAIRPPTVPAGTARLRLTLSAAHQDEDIDALLEALYDGCR.

A substrate-binding site is contributed by R21. Position 108-109 (108-109 (GF)) interacts with pyridoxal 5'-phosphate. H133 contacts substrate. Pyridoxal 5'-phosphate contacts are provided by S179, H207, and T233. At K236 the chain carries N6-(pyridoxal phosphate)lysine. Substrate is bound at residue T350.

The protein belongs to the class-II pyridoxal-phosphate-dependent aminotransferase family. BioF subfamily. As to quaternary structure, homodimer. It depends on pyridoxal 5'-phosphate as a cofactor.

The catalysed reaction is 6-carboxyhexanoyl-[ACP] + L-alanine + H(+) = (8S)-8-amino-7-oxononanoate + holo-[ACP] + CO2. Its pathway is cofactor biosynthesis; biotin biosynthesis. Functionally, catalyzes the decarboxylative condensation of pimeloyl-[acyl-carrier protein] and L-alanine to produce 8-amino-7-oxononanoate (AON), [acyl-carrier protein], and carbon dioxide. This is 8-amino-7-oxononanoate synthase from Cronobacter sakazakii (strain ATCC BAA-894) (Enterobacter sakazakii).